The chain runs to 35 residues: Photosystem II reaction center protein T (35 aa).

The chain crosses the membrane as a helical span at residues 3 to 23 (ALVYTFLLVSTLGIIFFAIFF).

This sequence belongs to the PsbT family. PSII is composed of 1 copy each of membrane proteins PsbA, PsbB, PsbC, PsbD, PsbE, PsbF, PsbH, PsbI, PsbJ, PsbK, PsbL, PsbM, PsbT, PsbY, PsbZ, Psb30/Ycf12, at least 3 peripheral proteins of the oxygen-evolving complex and a large number of cofactors. It forms dimeric complexes.

It localises to the plastid. It is found in the chloroplast thylakoid membrane. Found at the monomer-monomer interface of the photosystem II (PS II) dimer, plays a role in assembly and dimerization of PSII. PSII is a light-driven water plastoquinone oxidoreductase, using light energy to abstract electrons from H(2)O, generating a proton gradient subsequently used for ATP formation. This Drimys granadensis protein is Photosystem II reaction center protein T.